Reading from the N-terminus, the 697-residue chain is MASFSQVINPMTGQNTWQERGDDYDYHQEVANAGFGDMLHDWERNQKYYAALRKTIAAMRKAGKEVHALDIGTGTGILAMMALRAGADTVTACEAFMPMANCAARILAANDAAQVRLIRKRSTDIQMGIDMPHRANLLVAELLDTELIGEGAISIYNHAHQELLTDDALCIPARATCYAQVAQSPLATQWNSLKVLPSLDGDILLRPPAQLMECSGEAALHDVQLSQLPPNSFHTLTEPAQIFQFDFQRKQPREQQREHVLRLQLSKPGSVELVFYWWQIELDDAGEQLLSCAPYWAHPELQQLQKSFKDADRPLPNIVPWRDHWMQAIYYIPKPLQLHQAGEQFWLRCYHDEYSLWFDAHKEQPEQPARRHSCSCDLHLTYTRNRIGQLNQGTRNKRYLAYLEQAVQQAKPAHVLVIGDGCLLGLASSALGACSVRCLEPHRFSRRLLESVAKHNKLKNVRFLESLQQLEPEELNTLTHIFAEPYFLNAILPWDNFYFGTLLLQLQQQQKLSESVEISPCAARIYALPVQFLDLHKIRTPIISCEGFDLTLFDEMVQRSAKQALSQVEAQPLWEYPCRALAEPQLLLSVNFANFGVEQHNQGCLELTAKGNCNGVALWVDWQLAANNSSKSIVSTGPLEPIVPGQFVKWDMFVRQGVHFPSQTDDQTHLKWSTTLRPLLGELTFNFSLQASHEETK.

2 SAM-dependent MTase PRMT-type domains span residues 14–357 (QNTW…YSLW) and 366–697 (EQPA…EETK).

It belongs to the class I-like SAM-binding methyltransferase superfamily. Protein arginine N-methyltransferase family. PRMT7 subfamily.

In terms of biological role, essential arginine methyltransferase that can both catalyze the formation of omega-N monomethylarginine (MMA) and symmetrical dimethylarginine (sDMA). Specifically mediates the symmetrical dimethylation of arginine residues in the small nuclear ribonucleoproteins SmD1 and SmD3. This Drosophila virilis (Fruit fly) protein is Protein arginine N-methyltransferase 7 (Art7).